The following is a 763-amino-acid chain: MGFLLSAEQVGQFVSNQWQDPYAVLGPQQIEEAGKSFGLVRALVPNARQVWLVERATGQAYPMQPLHPETLFELRFEPGTPLPDYFLRAQRVWDPQGEHLEEWEDPYRFPLEKVNHIGELDRYLFNEGNHHRIYDKLGAHLITVDGVKGVHFAVWAPNARNVSVIGDFNHWDGRQHQMKRLGESGIWAVFIPGIGPGAIYKYEVKTSWGDIYEKSDPYGFQQEVRPKTGSIVADLNTYTWHDQAWLEKRAATDPLRSPISVYEVHLGSWMHASAEDPPAEGQSVLVDQKPNTRFLTYRELADKLIPYVKELGFTHIELLPVAEHPFDGSWGYQVIGYYAVTSRYGSPQDFMYFVDRAHQAGIGVIVDWVPGHFPKDGHGLAFFDGTHLYEYADPRKGEHKGWGTLVFNYGRNEVRNYLVANALFWFEKYHIDGIRVDAVASMLYLDYDRKEWIPNPYGGREHLEAIDFFRQLNTLIFKYNPGALSIAEESTAWPMVTWPTHVGGLGFNLKWNMGWMHDMLDYFHMDPWFRQFHPHLVTFSLMYAFSENYMLAFSHDEVVHGKSHMLGKMPGDHWHKFASLRALYGYMFTHPGKKTLFMSMEFGQWNEWNVWADLDWELLQYEPHAKLRHYVASLNHLLRSEPALYTQDTKPEGFRWIDCSDHRGIVSFIRYGEDPSEWVVVVCNFTPVVWPNYRIGVPERGFYRELLNSDAVEFWGSGVGNLGGKWTDDWAYHNLPYSLELCLPQLSTLVLKWQPPQPVESQN.

Residue aspartate 437 is the Nucleophile of the active site. Glutamate 488 serves as the catalytic Proton donor.

This sequence belongs to the glycosyl hydrolase 13 family. GlgB subfamily. In terms of assembly, monomer.

It catalyses the reaction Transfers a segment of a (1-&gt;4)-alpha-D-glucan chain to a primary hydroxy group in a similar glucan chain.. It functions in the pathway glycan biosynthesis; glycogen biosynthesis. Catalyzes the formation of the alpha-1,6-glucosidic linkages in glycogen by scission of a 1,4-alpha-linked oligosaccharide from growing alpha-1,4-glucan chains and the subsequent attachment of the oligosaccharide to the alpha-1,6 position. The sequence is that of 1,4-alpha-glucan branching enzyme GlgB from Synechococcus sp. (strain JA-2-3B'a(2-13)) (Cyanobacteria bacterium Yellowstone B-Prime).